The primary structure comprises 406 residues: Argininosuccinate synthase (406 aa).

9-17 (AYSGGLDTS) serves as a coordination point for ATP. Residue tyrosine 86 coordinates L-citrulline. Position 116 (glycine 116) interacts with ATP. Residues threonine 118, asparagine 122, and aspartate 123 each contribute to the L-aspartate site. An L-citrulline-binding site is contributed by asparagine 122. 5 residues coordinate L-citrulline: arginine 126, serine 174, serine 183, glutamate 259, and tyrosine 271.

It belongs to the argininosuccinate synthase family. Type 1 subfamily. As to quaternary structure, homotetramer.

It localises to the cytoplasm. The enzyme catalyses L-citrulline + L-aspartate + ATP = 2-(N(omega)-L-arginino)succinate + AMP + diphosphate + H(+). It participates in amino-acid biosynthesis; L-arginine biosynthesis; L-arginine from L-ornithine and carbamoyl phosphate: step 2/3. This chain is Argininosuccinate synthase, found in Geobacillus thermodenitrificans (strain NG80-2).